Here is a 178-residue protein sequence, read N- to C-terminus: Cell division protein ZapC (178 aa).

It belongs to the ZapC family. In terms of assembly, interacts directly with FtsZ.

It is found in the cytoplasm. Contributes to the efficiency of the cell division process by stabilizing the polymeric form of the cell division protein FtsZ. Acts by promoting interactions between FtsZ protofilaments and suppressing the GTPase activity of FtsZ. This is Cell division protein ZapC from Aeromonas hydrophila subsp. hydrophila (strain ATCC 7966 / DSM 30187 / BCRC 13018 / CCUG 14551 / JCM 1027 / KCTC 2358 / NCIMB 9240 / NCTC 8049).